The primary structure comprises 333 residues: Phospholipid phosphatase-related protein type 1 (333 aa).

A run of 3 helical transmembrane segments spans residues 12 to 32, 66 to 86, and 126 to 146; these read IIPC…LLAY, FIQP…IIFV, and FIGV…AGQV. An N-linked (GlcNAc...) asparagine glycan is attached at N162. 3 consecutive transmembrane segments (helical) span residues 200–217, 223–243, and 256–276; these read ASLS…ITST, SRLA…LTGL, and VVAG…CVVN.

Belongs to the PA-phosphatase related phosphoesterase family.

It is found in the cell membrane. The protein resides in the cell projection. The protein localises to the neuron projection. May play a role in neurite outgrowth and neurogenesis. This Danio rerio (Zebrafish) protein is Phospholipid phosphatase-related protein type 1 (plppr1).